The chain runs to 94 residues: Integration host factor subunit beta (94 aa).

The protein belongs to the bacterial histone-like protein family. In terms of assembly, heterodimer of an alpha and a beta chain.

Functionally, this protein is one of the two subunits of integration host factor, a specific DNA-binding protein that functions in genetic recombination as well as in transcriptional and translational control. This is Integration host factor subunit beta from Caulobacter sp. (strain K31).